The sequence spans 291 residues: DNA repair protein RecO (291 aa).

This sequence belongs to the RecO family.

In terms of biological role, involved in DNA repair and RecF pathway recombination. The polypeptide is DNA repair protein RecO (Cupriavidus pinatubonensis (strain JMP 134 / LMG 1197) (Cupriavidus necator (strain JMP 134))).